We begin with the raw amino-acid sequence, 291 residues long: Potassium-transporting ATPase subunit beta (291 aa).

Residues 1–36 (MAALQEKKSCSQRMEEFRHYCWNPDTGQMLGRTLSR) lie on the Cytoplasmic side of the membrane. A helical; Signal-anchor for type II membrane protein transmembrane segment spans residues 37 to 57 (WVWISLYYVAFYVVMTGLFAL). Topologically, residues 58 to 291 (CIYVLMQTID…KVEFKLKIQK (234 aa)) are extracellular. N-linked (GlcNAc...) asparagine glycosylation is found at Asn99, Asn103, Asn130, Asn146, and Asn161. The cysteines at positions 131 and 152 are disulfide-linked. A disulfide bond links Cys162 and Cys178. N-linked (GlcNAc...) asparagine glycosylation is found at Asn193 and Asn222. The segment at 194–291 (STPPRVDCTF…KVEFKLKIQK (98 aa)) is immunoglobulin-like. A disulfide bridge links Cys201 with Cys263.

It belongs to the X(+)/potassium ATPases subunit beta family. As to quaternary structure, the ATPase pump is composed of two subunits: alpha (catalytic) and beta (regulatory). Interacts with alpha subunit ATP12A; this interaction is required for the formation of a functionally active pump and targeting at the plasma membrane. Interacts (via N-terminus) with alpha subunit ATP4A (via the P-domain). N-glycosylation is necessary for assembly and functional expression of the pump at the plasma membrane.

Its subcellular location is the apical cell membrane. It localises to the cell membrane. Functionally, the beta subunit of the gastric H(+)/K(+) ATPase pump which transports H(+) ions in exchange for K(+) ions across the apical membrane of parietal cells. Plays a structural and regulatory role in the assembly and membrane targeting of a functionally active pump. Within a transport cycle, the transfer of a H(+) ion across the membrane is coupled to ATP hydrolysis and is associated with a transient phosphorylation of the alpha subunit that shifts the pump conformation from inward-facing (E1) to outward-facing state (E2). Interacts with the phosphorylation domain of the alpha subunit and functions as a ratchet, stabilizing the lumenal-open E2 conformation and preventing the reverse reaction of the transport cycle. In Oryctolagus cuniculus (Rabbit), this protein is Potassium-transporting ATPase subunit beta (ATP4B).